A 343-amino-acid chain; its full sequence is Flap endonuclease 1 (343 aa).

The interval 1-98 is N-domain; that stretch reads MGVPIGDLVP…KELEKRREAR (98 aa). Mg(2+)-binding residues include Asp27, Asp80, Glu152, Glu154, Asp173, Asp175, and Asp236. Residues 116–258 are I-domain; sequence EARKYAQRAT…KALEIVRYSR (143 aa). The interval 330-338 is interaction with PCNA; sequence RQSTLESWF.

It belongs to the XPG/RAD2 endonuclease family. FEN1 subfamily. In terms of assembly, interacts with PCNA. PCNA stimulates the nuclease activity without altering cleavage specificity. It depends on Mg(2+) as a cofactor.

Its function is as follows. Structure-specific nuclease with 5'-flap endonuclease and 5'-3' exonuclease activities involved in DNA replication and repair. During DNA replication, cleaves the 5'-overhanging flap structure that is generated by displacement synthesis when DNA polymerase encounters the 5'-end of a downstream Okazaki fragment. Binds the unpaired 3'-DNA end and kinks the DNA to facilitate 5' cleavage specificity. Cleaves one nucleotide into the double-stranded DNA from the junction in flap DNA, leaving a nick for ligation. Also involved in the base excision repair (BER) pathway. Acts as a genome stabilization factor that prevents flaps from equilibrating into structures that lead to duplications and deletions. Also possesses 5'-3' exonuclease activity on nicked or gapped double-stranded DNA. In Pyrococcus horikoshii (strain ATCC 700860 / DSM 12428 / JCM 9974 / NBRC 100139 / OT-3), this protein is Flap endonuclease 1.